The primary structure comprises 330 residues: MTTATGTKPKKMEAFKMERGVKYRDAAKTSVIQVRNIDPDQELLPKPSWMKIKLPAASAKIDSIKHGMRRHGLHSVCEEASCPNLHECFNHGTATFMIMGAICTRRCPFCDVAHGKPLPLDLEEPRKVAETVQDMKLKYVVITSVDRDDLADRGAAHFAATVREIKALNPECKVEILVPDFRGRVEQAVEILKQNPPDVFNHNLENVPRLYREVRPGADYKWSLELLKIFKQEFPNIPTKSGLMVGLGETNEEILEVMQDLRDHGVTMLTIGQYLQPSRHHLKVERYVPPEEFDMFRSEAERMGFEHAACGPFVRSSYHADLQAKGELVK.

Cys77, Cys82, Cys88, Cys103, Cys107, Cys110, and Ser317 together coordinate [4Fe-4S] cluster. A Radical SAM core domain is found at 89–306 (FNHGTATFMI…RSEAERMGFE (218 aa)).

The protein belongs to the radical SAM superfamily. Lipoyl synthase family. [4Fe-4S] cluster serves as cofactor.

Its subcellular location is the cytoplasm. The enzyme catalyses [[Fe-S] cluster scaffold protein carrying a second [4Fe-4S](2+) cluster] + N(6)-octanoyl-L-lysyl-[protein] + 2 oxidized [2Fe-2S]-[ferredoxin] + 2 S-adenosyl-L-methionine + 4 H(+) = [[Fe-S] cluster scaffold protein] + N(6)-[(R)-dihydrolipoyl]-L-lysyl-[protein] + 4 Fe(3+) + 2 hydrogen sulfide + 2 5'-deoxyadenosine + 2 L-methionine + 2 reduced [2Fe-2S]-[ferredoxin]. It functions in the pathway protein modification; protein lipoylation via endogenous pathway; protein N(6)-(lipoyl)lysine from octanoyl-[acyl-carrier-protein]: step 2/2. Functionally, catalyzes the radical-mediated insertion of two sulfur atoms into the C-6 and C-8 positions of the octanoyl moiety bound to the lipoyl domains of lipoate-dependent enzymes, thereby converting the octanoylated domains into lipoylated derivatives. The sequence is that of Lipoyl synthase from Actinobacillus pleuropneumoniae serotype 3 (strain JL03).